The sequence spans 1134 residues: Envelopment polyprotein (1134 aa).

A signal peptide spans 1-18 (MGIWKWLVMASLVWPVLT). The Lumenal portion of the chain corresponds to 19-487 (LRNVYDMKIE…GFHGWATAAL (469 aa)). 8 cysteine pairs are disulfide-bonded: cysteine 29–cysteine 151, cysteine 63–cysteine 157, cysteine 109–cysteine 128, cysteine 133–cysteine 138, cysteine 175–cysteine 185, cysteine 210–cysteine 247, cysteine 234–cysteine 351, and cysteine 380–cysteine 389. A glycan (N-linked (GlcNAc...) asparagine; by host) is linked at asparagine 134. Asparagine 235 and asparagine 347 each carry an N-linked (GlcNAc...) asparagine; by host glycan. Residue asparagine 399 is glycosylated (N-linked (GlcNAc...) asparagine; by host). Disulfide bonds link cysteine 405–cysteine 424 and cysteine 452–cysteine 475. A helical membrane pass occupies residues 488-508 (LVTFCFGWVLIPAVTFIILAI). The Cytoplasmic segment spans residues 509 to 627 (LKFIANIFHT…LNLFRYKSRC (119 aa)). The binding to the ribonucleoprotein stretch occupies residues 516-533 (FHTSNQENRLKSVLRKIK). CCHC-type zinc fingers lie at residues 545–565 (CDVC…GVSC) and 570–591 (CPYC…YKVC). Binding to the ribonucleoprotein stretches follow at residues 588-605 (YKVC…KKTV), 592-603 (QVTHRFRDDLKK), and 611-625 (TPGC…RYKS). The ITAM domain occupies 611-634 (TPGCYRTLNLFRYKSRCYIFTMWI). The YxxL signature appears at 615 to 618 (YRTL). Residues 628-648 (YIFTMWIFLLVLESILWAASA) form a helical membrane-spanning segment. At 649-1104 (SETPLTPVWN…EWISGIFSGN (456 aa)) the chain is on the lumenal side. Cystine bridges form between cysteine 734–cysteine 769, cysteine 738–cysteine 776, cysteine 750–cysteine 884, cysteine 764–cysteine 895, cysteine 779–cysteine 903, cysteine 805–cysteine 814, and cysteine 822–cysteine 831. A fusion loop region spans residues 756–776 (YQYETSWGCNPSDCPGCGTGC). The N-linked (GlcNAc...) asparagine; by host glycan is linked to asparagine 927. 5 disulfide bridges follow: cysteine 969-cysteine 999, cysteine 992-cysteine 1044, cysteine 1009-cysteine 1014, cysteine 1045-cysteine 1050, and cysteine 1084-cysteine 1088. A helical membrane pass occupies residues 1105–1125 (WIVLIVLCVFLLFSLVLLSIL). A binding to the ribonucleoprotein region spans residues 1121–1134 (LLSILCPVRKHKKS). Residues 1126 to 1134 (CPVRKHKKS) are Cytoplasmic-facing.

It belongs to the hantavirus envelope glycoprotein family. Homodimer. Homotetramer; forms heterotetrameric Gn-Gc spikes in the pre-fusion conformation. Interacts (via C-terminus) with the nucleoprotein. Interacts with host TUFM; this interaction contributes to the virus-induced degradation of mitochondria by autophagy, which leads to degradation of host MAVS and inhibition of type I interferon (IFN) responses. Interacts with host MAP1LC3B; this interaction contributes to the virus-induced degradation of mitochondria by autophagy, which leads to degradation of host MAVS and inhibition of type I interferon (IFN) responses. As to quaternary structure, homodimer. Homotetramer; forms heterotetrameric Gn-Gc spikes in the pre-fusion conformation. Homotrimer; forms homotrimer in the post-fusion conformation at acidic pH. Interacts (via C-terminus) with the nucleoprotein. Envelope polyprotein precursor is quickly cleaved in vivo just after synthesis, presumably by host signal peptidase.

The protein localises to the virion membrane. It localises to the host cell surface. Its subcellular location is the host Golgi apparatus membrane. The protein resides in the host endoplasmic reticulum membrane. It is found in the host mitochondrion. In terms of biological role, forms homotetramers with glycoprotein C at the surface of the virion. Attaches the virion to host cell receptors including integrin ITGAV/ITGB3. This attachment induces virion internalization predominantly through clathrin-dependent endocytosis. May also bind to host C1QBP for virus entry into the host cell. Mediates the assembly and budding of infectious virus particles through its interaction with the nucleocapsid protein and the viral genome. May dysregulate normal immune and endothelial cell responses through an ITAM motif. Translocates to mitochondria, binds to host TUFM and recruits MAP1LC3B. These interactions induce mitochondrial autophagy and therefore destruction of host MAVS leading to inhibition of type I interferon (IFN) responses. Concomitant breakdown of glycoprotein N is apparently prevented by the nucleoprotein that may inhibit Gn-stimulated autophagosome-lysosome fusion. Interacts with the viral genomic RNA. Forms homotetramers with glycoprotein N at the surface of the virion. Attaches the virion to host cell receptors including integrin ITGAV/ITGB3. This attachment induces virion internalization predominantly through clathrin-dependent endocytosis. May also bind to host C1QBP for virus entry into the host cell. Class II fusion protein that promotes fusion of viral membrane with host endosomal membrane after endocytosis of the virion. The chain is Envelopment polyprotein (GP) from Apodemus agrarius (Eurasian field mouse).